The sequence spans 106 residues: uncharacterized protein (106 aa).

2 disordered regions span residues 27 to 47 (FSDS…DVSD) and 83 to 106 (SPAM…VQSK). Over residues 29–39 (DSEDEPDDEAS) the composition is skewed to acidic residues. Over residues 94 to 106 (GIEREDRGGVQSK) the composition is skewed to basic and acidic residues.

It is found in the mitochondrion. This is an uncharacterized protein from Arabidopsis thaliana (Mouse-ear cress).